A 449-amino-acid polypeptide reads, in one-letter code: MAALAVLRYAGSSPLLWGWGPILFGLLGSVFVLLLPLVGIEEQCCATLKGLALLRCQMWGGIQRPVVHTTSLAVPFTALDLLPQKVKPSKETQLEAKAALQQALEMKKSGKREKAHKLLVHALNMNPEFVEALTELGTILEEEKDVVQADHLYTKALAISPCHEKALVSRDRTLPLVEEIDQRHFGIIDGKVRRLMSIPKGNSALRRVMEETYYHHIYHTVAIEGNTLTLSEIRHIIETRYAVPGKSLQEQNEAIGVDVAMKYINTTLLSRDGAITVNDILEIHRRVLGYADPVEAGRFRVNQVFVGHHIPPHPQDLDKHMQELVQWLNSEETLHLHPVEFAALAHYKLVYVHPFVDGNGRTSRLLMNLILMQASYPPITIRKEQRAEYYAALDTANEGDVRPFIRFIAKCTEMTLDTLLIATTEHAVGLPGASNHACPDCKQTIPVHS.

The chain crosses the membrane as a helical span at residues 15 to 35 (LLWGWGPILFGLLGSVFVLLL). TPR repeat units follow at residues 96-129 (AKAA…NPEF) and 130-163 (VEAL…SPCH). The Inhibitory (S/T)XXXE(G/N) motif signature appears at 220-225 (TVAIEG). Residues E224, 250–251 (EQ), 358–360 (GNG), and R364 each bind ATP. The region spanning 275–410 (ITVNDILEIH…VRPFIRFIAK (136 aa)) is the Fido domain.

Belongs to the fic family.

Its subcellular location is the membrane. The enzyme catalyses L-tyrosyl-[protein] + ATP = O-(5'-adenylyl)-L-tyrosyl-[protein] + diphosphate. It carries out the reaction L-threonyl-[protein] + ATP = 3-O-(5'-adenylyl)-L-threonyl-[protein] + diphosphate. Adenylyltransferase activity is inhibited by the inhibitory helix present at the N-terminus: Glu-224 binds ATP and competes with ATP-binding at Arg-364, thereby preventing adenylyltransferase activity. Activation dissociates ATP-binding from Glu-224, allowing ordered binding of the entire ATP moiety with the alpha-phosphate in an orientation that is productive for accepting an incoming target hydroxyl side chain. Adenylyltransferase that mediates the addition of adenosine 5'-monophosphate (AMP) to specific residues of target proteins. In Danio rerio (Zebrafish), this protein is Protein adenylyltransferase FICD (ficd).